The primary structure comprises 358 residues: Aminomethyltransferase (358 aa).

Belongs to the GcvT family. In terms of assembly, the glycine cleavage system is composed of four proteins: P, T, L and H.

It catalyses the reaction N(6)-[(R)-S(8)-aminomethyldihydrolipoyl]-L-lysyl-[protein] + (6S)-5,6,7,8-tetrahydrofolate = N(6)-[(R)-dihydrolipoyl]-L-lysyl-[protein] + (6R)-5,10-methylene-5,6,7,8-tetrahydrofolate + NH4(+). Its function is as follows. The glycine cleavage system catalyzes the degradation of glycine. The protein is Aminomethyltransferase of Francisella tularensis subsp. tularensis (strain WY96-3418).